We begin with the raw amino-acid sequence, 231 residues long: Large ribosomal subunit protein uL1 (231 aa).

Belongs to the universal ribosomal protein uL1 family. In terms of assembly, part of the 50S ribosomal subunit.

In terms of biological role, binds directly to 23S rRNA. The L1 stalk is quite mobile in the ribosome, and is involved in E site tRNA release. Protein L1 is also a translational repressor protein, it controls the translation of the L11 operon by binding to its mRNA. The chain is Large ribosomal subunit protein uL1 from Thioalkalivibrio sulfidiphilus (strain HL-EbGR7).